The following is a 458-amino-acid chain: Cell division protein FtsZ (458 aa).

Residues 22-26 (GAGGN), 109-111 (GTG), E140, R144, and D188 each bind GTP. The segment at 319–458 (KAEEEASKQP…IPFFKHRRQD (140 aa)) is disordered. The span at 368–379 (NTISHEAPTQSI) shows a compositional bias: polar residues. Residues 401 to 418 (KQDRKENNRPQPVENKEK) show a composition bias toward basic and acidic residues. Positions 425-439 (SFSSDDSTSISQIET) are enriched in low complexity.

The protein belongs to the FtsZ family. As to quaternary structure, homodimer. Polymerizes to form a dynamic ring structure in a strictly GTP-dependent manner. Interacts directly with several other division proteins.

It is found in the cytoplasm. In terms of biological role, essential cell division protein that forms a contractile ring structure (Z ring) at the future cell division site. The regulation of the ring assembly controls the timing and the location of cell division. One of the functions of the FtsZ ring is to recruit other cell division proteins to the septum to produce a new cell wall between the dividing cells. Binds GTP and shows GTPase activity. This Lactobacillus johnsonii (strain CNCM I-12250 / La1 / NCC 533) protein is Cell division protein FtsZ.